A 670-amino-acid polypeptide reads, in one-letter code: Oxidoreductase PigB (670 aa).

An N-terminal signal peptide occupies residues 1–19 (MIIQRLFGILYMLAGLAKA). The next 4 membrane-spanning stretches (helical) occupy residues 53–73 (GDVI…ILML), 76–96 (LWTT…VVIL), 98–118 (QSQP…LYML), and 238–258 (LVFF…VGFI).

Belongs to the flavin monoamine oxidase family. It depends on FAD as a cofactor.

Its subcellular location is the membrane. It functions in the pathway antibiotic biosynthesis; prodigiosin biosynthesis. Its function is as follows. Involved in the biosynthesis of 2-methyl-3-n-amyl-pyrrole (MAP), one of the terminal products involved in the biosynthesis of the red antibiotic prodigiosin (Pig). Catalyzes the oxidation of dihydro form of MAP (H2MAP) to yield MAP. The sequence is that of Oxidoreductase PigB from Serratia sp. (strain ATCC 39006) (Prodigiosinella confusarubida).